A 609-amino-acid chain; its full sequence is Manganese lipoxygenase (609 aa).

The signal sequence occupies residues 1–16 (MRLLLSIAGLTTVVNA). N-linked (GlcNAc...) asparagine glycosylation is found at asparagine 24, asparagine 115, asparagine 156, and asparagine 193. One can recognise a Lipoxygenase domain in the interval 117–609 (SLKAIQDHGG…PGVIPFYLSV (493 aa)). Mn(2+) contacts are provided by histidine 289 and histidine 294. N-linked (GlcNAc...) asparagine glycosylation is present at asparagine 385. Residues histidine 474 and asparagine 478 each coordinate Mn(2+). An N-linked (GlcNAc...) asparagine glycan is attached at asparagine 539. Valine 609 serves as a coordination point for Mn(2+).

Belongs to the lipoxygenase family. Manganese lipoxygenase subfamily. Mn(2+) serves as cofactor. N- and O-glycosylated.

It is found in the secreted. It catalyses the reaction (9Z,12Z)-octadecadienoate + O2 = (9S)-hydroperoxy-(10E,12Z)-octadecadienoate. The enzyme catalyses (9Z,12Z)-octadecadienoate + O2 = (11S)-hydroperoxy-(9Z,12Z)-octadecadienoate. It carries out the reaction (9Z,12Z)-octadecadienoate + O2 = (13R)-hydroperoxy-(9Z,11E)-octadecadienoate. The catalysed reaction is (9Z,12Z,15Z)-octadecatrienoate + O2 = (11R)-hydroperoxy-(9Z,12Z,15Z)-octadecatrienoate. Lipoxygenase that metabolizes linoleic and alpha-linolenic acids to 9-, 11- and 13-hydroperoxy fatty acids. Oxidizes linoleic acid to mainly 9S- and 13R-HPODE and alpha-linolenic acid to 11R-HPOTrE. The protein is Manganese lipoxygenase of Colletotrichum gloeosporioides (strain Cg-14) (Anthracnose fungus).